Consider the following 303-residue polypeptide: Protoheme IX farnesyltransferase (303 aa).

The next 6 helical transmembrane spans lie at 25 to 45 (MGLV…AIVM), 54 to 74 (IPQI…ACAL), 118 to 138 (CLFL…VGYV), 166 to 186 (IGWV…FLVV), 230 to 250 (LVLL…FVVI), and 280 to 300 (FVYS…VSLI).

The protein belongs to the UbiA prenyltransferase family. Protoheme IX farnesyltransferase subfamily. Interacts with CtaA.

The protein localises to the cell membrane. The catalysed reaction is heme b + (2E,6E)-farnesyl diphosphate + H2O = Fe(II)-heme o + diphosphate. It functions in the pathway porphyrin-containing compound metabolism; heme O biosynthesis; heme O from protoheme: step 1/1. Converts heme B (protoheme IX) to heme O by substitution of the vinyl group on carbon 2 of heme B porphyrin ring with a hydroxyethyl farnesyl side group. In Staphylococcus epidermidis (strain ATCC 35984 / DSM 28319 / BCRC 17069 / CCUG 31568 / BM 3577 / RP62A), this protein is Protoheme IX farnesyltransferase.